The sequence spans 78 residues: U-scoloptoxin(15)-Ssm2a (78 aa).

An N-terminal signal peptide occupies residues 1-23 (MEKKIIFLCFFVSLLTLPEFISS). The tract at residues 34–37 (PEKK) is important for inhibition of KCNQ4. 2 disulfides stabilise this stretch: C44–C70 and C48–C72.

Belongs to the SLPTX(15) family. As to expression, expressed by the venom gland.

The protein localises to the secreted. The chain is U-scoloptoxin(15)-Ssm2a from Scolopendra mutilans (Chinese red-headed centipede).